The primary structure comprises 1013 residues: RNA-binding protein 44 (1013 aa).

Disordered stretches follow at residues 1 to 25 (MQAT…FQND) and 56 to 94 (LATE…IFSQ). Residues 56–76 (LATEERASDKENSIVDQRDLS) show a composition bias toward basic and acidic residues. Residues 78 to 94 (LSFSENQDSNRGNIFSQ) are compositionally biased toward polar residues. A phosphoserine mark is found at Ser-365, Ser-368, Ser-510, Ser-681, and Ser-688. One can recognise an RRM domain in the interval 792-865 (FLIHVGGLCP…KSVTVRLVKI (74 aa)). The disordered stretch occupies residues 905–925 (RAKSRQLESEQDSEFPPLDQG).

In terms of assembly, homodimer. Interacts with TEX14. Highly expressed in testis. Also expressed in other tissues at lower level.

The protein resides in the cytoplasm. Functionally, component of intercellular bridges during meiosis. Intercellular bridges are evolutionarily conserved structures that connect differentiating germ cells. Not required for fertility. The polypeptide is RNA-binding protein 44 (Rbm44) (Mus musculus (Mouse)).